A 178-amino-acid chain; its full sequence is Probable chorismate pyruvate-lyase (178 aa).

Arg73, Leu111, and Glu163 together coordinate substrate.

This sequence belongs to the UbiC family.

The protein resides in the cytoplasm. It carries out the reaction chorismate = 4-hydroxybenzoate + pyruvate. It functions in the pathway cofactor biosynthesis; ubiquinone biosynthesis. Functionally, removes the pyruvyl group from chorismate, with concomitant aromatization of the ring, to provide 4-hydroxybenzoate (4HB) for the ubiquinone pathway. The protein is Probable chorismate pyruvate-lyase of Pseudomonas aeruginosa (strain ATCC 15692 / DSM 22644 / CIP 104116 / JCM 14847 / LMG 12228 / 1C / PRS 101 / PAO1).